A 344-amino-acid chain; its full sequence is Ferrochelatase (344 aa).

The Fe cation site is built by H214 and E295.

Belongs to the ferrochelatase family.

Its subcellular location is the cytoplasm. The enzyme catalyses heme b + 2 H(+) = protoporphyrin IX + Fe(2+). The protein operates within porphyrin-containing compound metabolism; protoheme biosynthesis; protoheme from protoporphyrin-IX: step 1/1. In terms of biological role, catalyzes the ferrous insertion into protoporphyrin IX. The chain is Ferrochelatase from Agrobacterium fabrum (strain C58 / ATCC 33970) (Agrobacterium tumefaciens (strain C58)).